Reading from the N-terminus, the 1135-residue chain is MRRLSLWWLLSRVCLLLPPPCALVLAGVPSSSSHPQPCQILKRIGHAVRVGAVHLQPWTTAPRAASRAQEGGRAGAQRDDPESGTWRPPAPSQGARWLGSALHGRGPPGSRKLGEGAGAETLWPRDALLFAVENLNRVEGLLPYNLSLEVVMAIEAGLGDLPLMPFSSPSSPWSSDPFSFLQSVCHTVVVQGVSALLAFPQSQGEMMELDLVSSVLHIPVLSIVRHEFPRESQNPLHLQLSLENSLSSDADVTVSILTMNNWYNFSLLLCQEDWNITDFLLLTENNSKFHLESVINITANLSSTKDLLSFLQVQMDNIRNSTPTMVMFGCDMDSIRQIFEMSTQFGLSPPELHWVLGDSQNVEELRTEGLPLGLIAHGKTTQSVFEYYVQDAMELVARAVATATMIQPELALLPSTMNCMDVKTTNLTSGQYLSRFLANTTFRGLSGSIKVKGSTIISSENNFFIWNLQHDPMGKPMWTRLGSWQGGRIVMDSGIWPEQAQRHKTHFQHPNKLHLRVVTLIEHPFVFTREVDDEGLCPAGQLCLDPMTNDSSMLDRLFSSLHSSNDTVPIKFKKCCYGYCIDLLEQLAEDMNFDFDLYIVGDGKYGAWKNGHWTGLVGDLLSGTANMAVTSFSINTARSQVIDFTSPFFSTSLGILVRTRDTAAPIGAFMWPLHWTMWLGIFVALHITAIFLTLYEWKSPFGMTPKGRNRNKVFSFSSALNVCYALLFGRTAAIKPPKCWTGRFLMNLWAIFCMFCLSTYTANLAAVMVGEKIYEELSGIHDPKLHHPSQGFRFGTVRESSAEDYVRQSFPEMHEYMRRYNVPATPDGVQYLKNDPEKLDAFIMDKALLDYEVSIDADCKLLTVGKPFAIEGYGIGLPPNSPLTSNISELISQYKSHGFMDVLHDKWYKVVPCGKRSFAVTETLQMGIKHFSGLFVLLCIGFGLSILTTIGEHIVHRLLLPRIKNKSKLQYWLHTSQRFHRALNTSFVEEKQPRSKTKRVEKSRWRRWTCKTEGDSELSLFPRSNLGPQQLMVWNTSNLSHDNQRKYIFNDEEGQNQLGTQAHQDIPLPQRRRELPASLTTNGKADSLNVTRSSVIQELSELEKQIQVIRQELQLAVSRKTELEEYQKTNRTCES.

The signal sequence occupies residues 1-23; it reads MRRLSLWWLLSRVCLLLPPPCAL. Residues 24-674 lie on the Extracellular side of the membrane; that stretch reads VLAGVPSSSS…PIGAFMWPLH (651 aa). Residues 60-117 are disordered; it reads TAPRAASRAQEGGRAGAQRDDPESGTWRPPAPSQGARWLGSALHGRGPPGSRKLGEGA. N-linked (GlcNAc...) asparagine glycosylation is found at asparagine 145, asparagine 264, asparagine 275, asparagine 285, asparagine 296, asparagine 300, asparagine 426, asparagine 439, asparagine 549, and asparagine 565. 2 disulfide bridges follow: cysteine 537-cysteine 575 and cysteine 543-cysteine 576. 3 residues coordinate glycine: serine 631, serine 633, and arginine 638. D-serine-binding residues include serine 633 and arginine 638. The helical transmembrane segment at 675–694 threads the bilayer; it reads WTMWLGIFVALHITAIFLTL. At 695 to 715 the chain is on the cytoplasmic side; it reads YEWKSPFGMTPKGRNRNKVFS. The discontinuously helical intramembrane region spans 716 to 727; it reads FSSALNVCYALL. The Cytoplasmic portion of the chain corresponds to 728 to 741; the sequence is FGRTAAIKPPKCWT. The chain crosses the membrane as a helical span at residues 742 to 761; it reads GRFLMNLWAIFCMFCLSTYT. Residues 762-932 are Extracellular-facing; sequence ANLAAVMVGE…TLQMGIKHFS (171 aa). Position 801 (serine 801) interacts with glycine. Serine 801, alanine 802, and aspartate 845 together coordinate D-serine. Aspartate 845 lines the glycine pocket. A disulfide bond links cysteine 859 and cysteine 913. The N-linked (GlcNAc...) asparagine glycan is linked to asparagine 886. Residues 933–948 traverse the membrane as a helical segment; sequence GLFVLLCIGFGLSILT. The Cytoplasmic portion of the chain corresponds to 949–1135; that stretch reads TIGEHIVHRL…YQKTNRTCES (187 aa). The tract at residues 951–987 is PPP2CB binding site; it reads GEHIVHRLLLPRIKNKSKLQYWLHTSQRFHRALNTSF. Residues 1080 to 1129 adopt a coiled-coil conformation; that stretch reads TTNGKADSLNVTRSSVIQELSELEKQIQVIRQELQLAVSRKTELEEYQKT. Residues 1082–1115 form a GIT1-binding region; that stretch reads NGKADSLNVTRSSVIQELSELEKQIQVIRQELQL.

This sequence belongs to the glutamate-gated ion channel (TC 1.A.10.1) family. NR3A/GRIN3A subfamily. Heterotetramer. Forms heterotetrameric channels composed of two GluN1/zeta subunits (GRIN1), and two identical GluN3 subunits (GRIN3A or GRIN3B) (in vitro). Can also form heterotetrameric channels that contain at least two GluN1 subunits and at least a combination of one GluN2 and one GluN3 subunits (in vitro). Does not form functional homomeric channels. Found in a complex with GRIN1, GRIN2A or GRIN2B and PPP2CB. Probably interacts with PPP2CB. No complex with PPP2CB is detected when NMDARs are stimulated by NMDA. Interacts (via C-terminus) with GIT1, but not with GRIA1/GluA1, nor with synaptophysin/SYP; this interaction competes with GIT1 interaction with ARHGEF7/beta-PIX. Post-translationally, N-glycosylated. In terms of tissue distribution, isoform 1 and isoform 2 are expressed in olfactory bulb, frontal occipital, entorhinal and pyriform cortices, hippocampus, striatum, thalamus, cerebellum and spinal cord.

The protein resides in the cell membrane. The protein localises to the postsynaptic cell membrane. It is found in the postsynaptic density. The enzyme catalyses Ca(2+)(in) = Ca(2+)(out). The catalysed reaction is Na(+)(in) = Na(+)(out). Excitatory glycine receptors are inhibited by D-serine at a concentrion of 10uM. In terms of biological role, component of a non-conventional N-methyl-D-aspartate (NMDA) receptors (NMDARs) that function as heterotetrameric, ligand-gated cation channels with low calcium permeability and low voltage-dependent block by Mg(2+). During the development of neural circuits, participates in the synaptic refinement period, restricting spine maturation and growth. Forms glutamatergic receptor complexes with GluN1 and GluN2 subunits which are activated by glycine binding to the GluN1 and GluN3 subunits and L-glutamate binding to GluN2 subunits. Forms excitatory glycinergic receptor complexes with GluN1 alone which are activated by glycine binding to the GluN1 and GluN3 subunits. GluN3A subunit also binds D-serine. Each GluN3 subunit confers differential attributes to channel properties, including activation, deactivation and desensitization kinetics, pH sensitivity, Ca2(+) permeability, and binding to allosteric modulators. By competing with GIT1 interaction with ARHGEF7/beta-PIX, may reduce GIT1/ARHGEF7-regulated local activation of RAC1, hence affecting signaling and limiting the maturation and growth of inactive synapses. In Rattus norvegicus (Rat), this protein is Glutamate receptor ionotropic, NMDA 3A.